A 206-amino-acid chain; its full sequence is mRNA-decapping protein D9 (206 aa).

The 184-residue stretch at 23–206 folds into the Nudix hydrolase domain; the sequence is KKTHVFAICV…FIYNTLLYSK (184 aa). Residues 104–125 carry the Nudix box motif; the sequence is GKLNKSETIDDCIRREIKEETD. Residue glutamate 110 participates in Mg(2+) binding. The active-site Nucleophile is glutamate 119. Glutamate 123 and aspartate 144 together coordinate Mg(2+).

The protein belongs to the Nudix hydrolase family. Mg(2+) serves as cofactor. Mn(2+) is required as a cofactor.

In terms of biological role, decapping enzyme required for the removal of the 5'-end m7GpppN cap tethered to viral and host mRNAs to allow their decay in cells. May therefore accelerate viral and cellular mRNA turnover to eliminate competing host mRNAs and allow stage-specific synthesis of viral proteins. Acceleration of the turnover of cellular transcripts may even promote the shutoff of host protein synthesis. Does not cleave unmethylated RNAs or RNAs shorter than 24 nucleotides. The protein is mRNA-decapping protein D9 of Oryctolagus cuniculus (Rabbit).